We begin with the raw amino-acid sequence, 206 residues long: MHTCRAPFMLHRVMIPPDPIQRFAELFERAKQAIAVDPNAMVVATVGDDGRPSARVVLLKDFDARGFVFYTNHESRKGREARAHPYAALCFYWQPLNEQVRVEGRVERVTDAEADAYFQSRARGSQVGAWASLQSQPLATREELEARVAEVEQKYAGQPVPRPPHWSGFRVVPDRIEFWHAQESRLHDRHVYLREDGGWRTQMLYP.

FMN is bound by residues 55–60, 70–71, Arg76, Lys77, and Gln99; these read RVVLLK and YT. Lys60 provides a ligand contact to substrate. Residues Tyr117, Arg121, and Ser125 each coordinate substrate. FMN contacts are provided by residues 134-135 and Trp179; that span reads QS. 185–187 is a binding site for substrate; sequence RLH. Position 189 (Arg189) interacts with FMN.

This sequence belongs to the pyridoxamine 5'-phosphate oxidase family. As to quaternary structure, homodimer. It depends on FMN as a cofactor.

It catalyses the reaction pyridoxamine 5'-phosphate + O2 + H2O = pyridoxal 5'-phosphate + H2O2 + NH4(+). The catalysed reaction is pyridoxine 5'-phosphate + O2 = pyridoxal 5'-phosphate + H2O2. It functions in the pathway cofactor metabolism; pyridoxal 5'-phosphate salvage; pyridoxal 5'-phosphate from pyridoxamine 5'-phosphate: step 1/1. The protein operates within cofactor metabolism; pyridoxal 5'-phosphate salvage; pyridoxal 5'-phosphate from pyridoxine 5'-phosphate: step 1/1. In terms of biological role, catalyzes the oxidation of either pyridoxine 5'-phosphate (PNP) or pyridoxamine 5'-phosphate (PMP) into pyridoxal 5'-phosphate (PLP). In Myxococcus xanthus (strain DK1622), this protein is Pyridoxine/pyridoxamine 5'-phosphate oxidase.